The chain runs to 165 residues: MTDATPRRSAYSRLLDRAMRILAMRDHSEQELRRKLGAVLPGKNEEEQEQATPEDIEKVIAWCHEQHYLDDARFAERYIASRGRKGYGPQRIRQELQQKGISRNACDSAFADCEVDWEQQARDQAERKFGAPLPRTFPEKAKVQRFLLYRGYYMEDIQAIYRNFE.

This sequence belongs to the RecX family.

It is found in the cytoplasm. Functionally, modulates RecA activity. The polypeptide is Regulatory protein RecX (Cronobacter sakazakii (strain ATCC BAA-894) (Enterobacter sakazakii)).